The chain runs to 670 residues: Receptor for retinol uptake STRA6 (670 aa).

Over 1-50 the chain is Extracellular; sequence MESQASENGSQTSSGVTDDYSSWYIEEPLGAEEVQPEGVIPLCQLTAPPA. An N-linked (GlcNAc...) asparagine glycan is attached at Asn8. A helical membrane pass occupies residues 51–71; the sequence is LLHACLASLSFLVLLLLALLV. Topologically, residues 72–97 are cytoplasmic; sequence RRRRLWPRCGHRGLGLPSPVDFLAGD. Residues 98–118 traverse the membrane as a helical segment; sequence LSWTVPAAVFVVLFSNLCLLL. At 119–144 the chain is on the extracellular side; that stretch reads PDENPLPFLNLTAASSPDGEMETSRG. Asn128 carries an N-linked (GlcNAc...) asparagine glycan. Residues 145-165 traverse the membrane as a helical segment; that stretch reads PWKLLALLYYPALYYPLAACA. Over 166–168 the chain is Cytoplasmic; that stretch reads SAG. Residues 169 to 189 traverse the membrane as a helical segment; that stretch reads HQAAFLLGTVLSWAHFGVQVW. Residues 190-205 lie on the Extracellular side of the membrane; the sequence is QKAECPQDPKIYKHYS. A helical membrane pass occupies residues 206-226; sequence LLASLPLLLGLGFLSLWYPVQ. Residues 227 to 296 lie on the Cytoplasmic side of the membrane; sequence LVQSLRHRTG…PQPGFRLPLK (70 aa). Positions 235–294 are interaction with RBP1; that stretch reads TGAGSQGLQTSYSEKYLRTLLCPKKLDSCSHPASKRSLLSRAWAFSHHSIYTPQPGFRLP. The helical transmembrane segment at 297–317 threads the bilayer; the sequence is LVISATLTGTATYQVALLLLV. The Extracellular portion of the chain corresponds to 318–368; the sequence is SVVPTVQKVRAGINTDVSYLLAGFGIVLSEDRQEVVELVKHHLWTVEACYI. Residues 369–389 form a helical membrane-spanning segment; that stretch reads SALVLSCASTFLLLIRSLRTH. Residues 390-423 lie on the Cytoplasmic side of the membrane; it reads RANLQALHRGAALDLDPPLQSIHPSRQAIVSWMS. Residues 424-444 form a helical membrane-spanning segment; it reads FCAYQTAFSCLGLLVQQVIFF. Topologically, residues 445-474 are extracellular; it reads LGTTSLAFLVFVPLLHGRNLLLLRSLESTW. Residues 475–495 form a helical membrane-spanning segment; it reads PFWLTVALAVILQNIAANWIF. Residues 496 to 510 lie on the Cytoplasmic side of the membrane; that stretch reads LRTHHGYPELTNRRM. The segment at residues 511–548 is an intramembrane region (helical); the sequence is LCVATFLLFPINMLVGAIMAVWRVLISSLYNTVHLGQM. Topologically, residues 549–670 are cytoplasmic; it reads DLSLLPQRAA…TSAKANGTQP (122 aa). Tyr644 carries the post-translational modification Phosphotyrosine.

In terms of assembly, homodimer. Interacts with JAK2 and STAT5. Interacts (via extracellular domains) with RBP4. Interacts (via cytoplasmic domains) with RBP1. In terms of processing, phosphorylated on tyrosine residues in response to RBP4 binding. Phosphorylation requires the presence of LRAT, suggesting it may be triggered by the uptake of retinol that is then metabolized within the cell to retinoids that function as signaling molecules. As to expression, widely expressed in the embryo. Detected in adult in the retinal pigment epithelium in the eye. In the adult, is highly expressed in cells that compose blood-organ barriers in the brain (choroid plexus and the brain microvascular), in testis (the basal layer of the seminiferous epithelium), in the yolk sac, and in the chorioallantoic placenta. Detected in white adipose tissue and skeletal muscle, but not in liver (at protein level). Widely expressed in adult, with high expression levels in the eye. Detected in brain, cerebellum, testis, pituitary, pancreas, kidney, spleen, and female genital tract; and at very low levels in heart and lung. Not detected in liver.

It localises to the cell membrane. In terms of biological role, functions as a retinol transporter. Accepts all-trans retinol from the extracellular retinol-binding protein RBP4, facilitates retinol transport across the cell membrane, and then transfers retinol to the cytoplasmic retinol-binding protein RBP1. Retinol uptake is enhanced by LRAT, an enzyme that converts retinol to all-trans retinyl esters, the storage forms of vitamin A. Contributes to the activation of a signaling cascade that depends on retinol transport and LRAT-dependent generation of retinol metabolites that then trigger activation of JAK2 and its target STAT5, and ultimately increase the expression of SOCS3 and inhibit cellular responses to insulin. Important for the homeostasis of vitamin A and its derivatives, such as retinoic acid and 11-cis-retinal. STRA6-mediated transport is particularly important in the eye, and under conditions of dietary vitamin A deficiency. Does not transport retinoic acid. In Mus musculus (Mouse), this protein is Receptor for retinol uptake STRA6 (Stra6).